The sequence spans 407 residues: MELGSRRIYTTMPSKLRSSSSLLPRILLLSLLLLLFYSLILRRPITSNIASPPPCDLFSGRWVFNPETPKPLYDETCPFHRNAWNCLRNKRDNMDVINSWRWEPNGCGLSRIDPTRFLGMMRNKNVGFVGDSLNENFLVSFLCILRVADPSAIKWKKKKAWRGAYFPKFNVTVAYHRAVLLAKYQWQARSSAEANQDGVKGTYRVDVDVPANEWINVTSFYDVLIFNSGHWWGYDKFPKETPLVFYRKGKPINPPLDILPGFELVLQNMVSYIQREVPAKTLKFWRLQSPRHFYGGDWNQNGSCLLDKPLEENQLDLWFDPRNNGVNKEARKINQIIKNELQTTKIKLLDLTHLSEFRADAHPAIWLGKQDAVAIWGQDCMHWCLPGVPDTWVDILAELILTNLKTE.

Residues 21 to 41 (SLLPRILLLSLLLLLFYSLIL) form a helical; Signal-anchor for type II membrane protein membrane-spanning segment. The GDS motif motif lies at 130–132 (GDS). The short motif at 379 to 393 (DCMHWCLPGVPDTWV) is the DCXHWCLPGXXDXWN motif element.

It belongs to the PC-esterase family. TBL subfamily.

It localises to the membrane. Its function is as follows. May act as a bridging protein that binds pectin and other cell wall polysaccharides. Probably involved in maintaining esterification of pectins. May be involved in the specific O-acetylation of cell wall polymers. The chain is Protein trichome birefringence-like 12 (TBL12) from Arabidopsis thaliana (Mouse-ear cress).